We begin with the raw amino-acid sequence, 833 residues long: Ribosome biogenesis protein BOP1 homolog (833 aa).

Residues 20-202 (NKKSEPIAVS…DSDDSSEDES (183 aa)) form a disordered region. Residues 36-56 (SKPTTTATTTVSKSPVSTITT) show a composition bias toward low complexity. Acidic residues-rich tracts occupy residues 90–111 (SEDDEDYESEEDDEGDDEEDVE) and 136–150 (EAEESLVEYQSEDDS). Residues 154–170 (SSKSSSSTTTTTTTTKK) show a composition bias toward low complexity. Polar residues predominate over residues 182-192 (KQWTNDPNQFY). Residues 193–202 (DSDDSSEDES) are compositionally biased toward acidic residues. WD repeat units follow at residues 331-370 (TKAIRMGWIKLNKKGKKGEKDKKDGNFDLWADEGEEKEKT), 488-527 (GHKARVRSISISPNGQWLASGSDDCTIKIWEVSSTRCLYS), and 529-569 (EVES…TQTE). A disordered region spans residues 568 to 592 (TEHSPETEKILTKPPTDSSTEQQQN). The span at 582-592 (PTDSSTEQQQN) shows a compositional bias: polar residues. WD repeat units follow at residues 618–660 (HHPF…TQSP), 663–701 (KSKTPNQVTRFHPNKPIFFVADQNIIRVYDLMKQELIKK), 704–743 (TGCRYISSIDIHPQGDNVIMGGYDKKVCWFDLDLSVRPYK), 747–786 (YHKMAVRKVIYHPTLPLFASCSDDLSIHVFHGMVYDDLLQ), and 802–833 (INDLGVLDIVFHPKQPWIFSSGADSTIRLYTN).

Belongs to the WD repeat BOP1/ERB1 family.

It is found in the nucleus. The protein resides in the nucleolus. The protein localises to the nucleoplasm. Required for maturation of ribosomal RNAs and formation of the large ribosomal subunit. This is Ribosome biogenesis protein BOP1 homolog from Dictyostelium discoideum (Social amoeba).